The primary structure comprises 863 residues: Desmocollin-2 (863 aa).

The propeptide occupies 1–89 (KFIGRVNLKE…QEKVLRRAKR (89 aa)). 5 Cadherin domains span residues 90-197 (RWAP…APIF), 198-309 (TETS…LPTF), 310-423 (TRSS…GPEC), 424-528 (DPRV…VIPQ), and 529-644 (RTVV…ILGK). Topologically, residues 90–644 (RWAPIPCSVP…TGNREVILGK (555 aa)) are extracellular. The N-linked (GlcNAc...) asparagine glycan is linked to asparagine 120. N-linked (GlcNAc...) asparagine glycans are attached at residues asparagine 346, asparagine 495, and asparagine 579. A helical membrane pass occupies residues 645 to 665 (WAILAILLGIALLFCILFTLV). Topologically, residues 666–863 (CGATTGADKK…RTLAETCMKR (198 aa)) are cytoplasmic. Serine 826, serine 830, and serine 835 each carry phosphoserine.

Interacts with DSP, PKP2 and JUP. Interacts with DSG3; the interaction may limit the interaction of DSC3 with p38MAPK family members and therefore repress p38MAPK signaling activation. As to expression, expressed in esophagus and rumen. Weakly expressed in epithelia and cardiac muscle.

The protein localises to the cell membrane. Its subcellular location is the cell junction. The protein resides in the desmosome. Its function is as follows. A component of desmosome cell-cell junctions which are required for positive regulation of cellular adhesion. Promotes timely incorporation of DSG2 into desmosome intercellular junctions and promotes interaction of desmosome cell junctions with intermediate filament cytokeratin, via modulation of DSP phosphorylation. Plays an important role in desmosome-mediated maintenance of intestinal epithelial cell intercellular adhesion strength and barrier function. Positively regulates wound healing of intestinal mucosa via promotion of epithelial cell migration, and also plays a role in mechanotransduction of force between intestinal epithelial cells and extracellular matrix. May contribute to epidermal cell positioning (stratification) by mediating differential adhesiveness between cells that express different isoforms. The protein is Desmocollin-2 (DSC2) of Bos taurus (Bovine).